Here is a 172-residue protein sequence, read N- to C-terminus: MLSGLQNPRQAAAQLMNFALILSTAFMMWKGLSVATDSPSPIVVVLSGSMEPAFQRGDLLLLWNRNMWQETAVGEIVVYNVKGKDIPIVHRVVRKFGTGDKAKLLTKGDNNNADDTDLYARGQDYLERKDIIGSVVAYFPFVGYVTILLSEHPWLKTVMLGIMGLLVVIQRE.

Over 1 to 14 (MLSGLQNPRQAAAQ) the chain is Cytoplasmic. A helical; Signal-anchor for type II membrane protein membrane pass occupies residues 15–35 (LMNFALILSTAFMMWKGLSVA). Topologically, residues 36–172 (TDSPSPIVVV…MGLLVVIQRE (137 aa)) are lumenal. Residues serine 49, histidine 90, and aspartate 115 each act as charge relay system in the active site. Positions 158–169 (VMLGIMGLLVVI) are C-terminal short (CTS) helix.

The protein belongs to the peptidase S26B family. As to quaternary structure, component of the signal peptidase complex (SPC) composed of a catalytic subunit SEC11 and three accessory subunits SPC1, SPC2 and SPC3. The complex induces a local thinning of the ER membrane which is used to measure the length of the signal peptide (SP) h-region of protein substrates. This ensures the selectivity of the complex towards h-regions shorter than 18-20 amino acids. SPC associates with the translocon complex.

It is found in the endoplasmic reticulum membrane. The catalysed reaction is Cleavage of hydrophobic, N-terminal signal or leader sequences from secreted and periplasmic proteins.. Functionally, catalytic component of the signal peptidase complex (SPC) which catalyzes the cleavage of N-terminal signal sequences from nascent proteins as they are translocated into the lumen of the endoplasmic reticulum. Specifically cleaves N-terminal signal peptides that contain a hydrophobic alpha-helix (h-region) shorter than 18-20 amino acids. This chain is Signal peptidase complex catalytic subunit SEC11 (SEC11), found in Metarhizium acridum (strain CQMa 102).